A 149-amino-acid polypeptide reads, in one-letter code: Large ribosomal subunit protein uL15 (149 aa).

A disordered region spans residues 1–61; sequence MELNSLRPAL…GGQMPLQRRL (61 aa). A compositionally biased stretch (basic residues) spans 30 to 39; the sequence is TATKGHKGQK.

It belongs to the universal ribosomal protein uL15 family. Part of the 50S ribosomal subunit.

Binds to the 23S rRNA. This chain is Large ribosomal subunit protein uL15, found in Trichlorobacter lovleyi (strain ATCC BAA-1151 / DSM 17278 / SZ) (Geobacter lovleyi).